The following is a 271-amino-acid chain: Putative pyruvate, phosphate dikinase regulatory protein (271 aa).

150–157 serves as a coordination point for ADP; the sequence is GVSRTSKT.

It belongs to the pyruvate, phosphate/water dikinase regulatory protein family. PDRP subfamily.

It carries out the reaction N(tele)-phospho-L-histidyl/L-threonyl-[pyruvate, phosphate dikinase] + ADP = N(tele)-phospho-L-histidyl/O-phospho-L-threonyl-[pyruvate, phosphate dikinase] + AMP + H(+). The enzyme catalyses N(tele)-phospho-L-histidyl/O-phospho-L-threonyl-[pyruvate, phosphate dikinase] + phosphate + H(+) = N(tele)-phospho-L-histidyl/L-threonyl-[pyruvate, phosphate dikinase] + diphosphate. Functionally, bifunctional serine/threonine kinase and phosphorylase involved in the regulation of the pyruvate, phosphate dikinase (PPDK) by catalyzing its phosphorylation/dephosphorylation. This chain is Putative pyruvate, phosphate dikinase regulatory protein, found in Oceanobacillus iheyensis (strain DSM 14371 / CIP 107618 / JCM 11309 / KCTC 3954 / HTE831).